The chain runs to 463 residues: O-acetyltransferase SAT5 (463 aa).

This sequence belongs to the trichothecene 3-O-acetyltransferase family.

It participates in mycotoxin biosynthesis. Its function is as follows. O-acetyltransferase; part of the satratoxin SC1 cluster involved in the biosynthesis of satratoxins, trichothecene mycotoxins that are associated with human food poisonings. Satratoxins are suggested to be made by products of multiple gene clusters (SC1, SC2 and SC3) that encode 21 proteins in all, including polyketide synthases, acetyltransferases, and other enzymes expected to modify the trichothecene skeleton. SC1 encodes 10 proteins, SAT1 to SAT10. The largest are SAT8, which encodes a putative polyketide synthase (PKS) with a conventional non-reducing architecture, and SAT10, a putative protein containing four ankyrin repeats and thus may be involved in protein scaffolding. The putative short-chain reductase SAT3 may assist the PKS in some capacity. SAT6 contains a secretory lipase domain and acts probably as a trichothecene esterase. SAT5 encodes a putative acetyltransferase, and so, with SAT6, may affect endogenous protection from toxicity. The probable transcription factor SAT9 may regulate the expression of the SC1 cluster. SC2 encodes proteins SAT11 to SAT16, the largest of which encodes the putative reducing PKS SAT13. SAT11 is a cytochrome P450 monooxygenase, while SAT14 and SAT16 are probable acetyltransferases. The SC2 cluster may be regulated by the transcription factor SAT15. SC3 is a small cluster that encodes 5 proteins, SAT17 to SAT21. SAT21 is a putative MFS-type transporter which may have a role in exporting secondary metabolites. The four other proteins putatively encoded in SC3 include the taurine hydroxylase-like protein SAT17, the O-methyltransferase SAT18, the acetyltransferase SAT19, and the Cys6-type zinc finger SAT20, the latter being probably involved in regulation of SC3 expression. The sequence is that of O-acetyltransferase SAT5 from Stachybotrys chartarum (strain CBS 109288 / IBT 7711) (Toxic black mold).